Consider the following 307-residue polypeptide: Aspartate carbamoyltransferase catalytic subunit (307 aa).

Residues arginine 54 and threonine 55 each coordinate carbamoyl phosphate. An L-aspartate-binding site is contributed by lysine 83. Positions 104, 132, and 135 each coordinate carbamoyl phosphate. Positions 165 and 228 each coordinate L-aspartate. 2 residues coordinate carbamoyl phosphate: leucine 267 and proline 268.

The protein belongs to the aspartate/ornithine carbamoyltransferase superfamily. ATCase family. In terms of assembly, heterododecamer (2C3:3R2) of six catalytic PyrB chains organized as two trimers (C3), and six regulatory PyrI chains organized as three dimers (R2).

The enzyme catalyses carbamoyl phosphate + L-aspartate = N-carbamoyl-L-aspartate + phosphate + H(+). The protein operates within pyrimidine metabolism; UMP biosynthesis via de novo pathway; (S)-dihydroorotate from bicarbonate: step 2/3. Catalyzes the condensation of carbamoyl phosphate and aspartate to form carbamoyl aspartate and inorganic phosphate, the committed step in the de novo pyrimidine nucleotide biosynthesis pathway. The sequence is that of Aspartate carbamoyltransferase catalytic subunit from Clostridium perfringens (strain SM101 / Type A).